Here is a 165-residue protein sequence, read N- to C-terminus: Cytochrome c-type biogenesis protein CcmE (165 aa).

The Cytoplasmic segment spans residues 1–7 (MTRKQKR). The chain crosses the membrane as a helical; Signal-anchor for type II membrane protein span at residues 8 to 28 (LAVIAGGMGFIIAAVLLVMFA). At 29–165 (FSQSVAYFYM…GQGQEAKATR (137 aa)) the chain is on the periplasmic side. Heme contacts are provided by H124 and Y128. Over residues 144–154 (QDGQGAQSQAG) the composition is skewed to low complexity. Positions 144–165 (QDGQGAQSQAGQGQGQEAKATR) are disordered.

It belongs to the CcmE/CycJ family.

It localises to the cell inner membrane. Its function is as follows. Heme chaperone required for the biogenesis of c-type cytochromes. Transiently binds heme delivered by CcmC and transfers the heme to apo-cytochromes in a process facilitated by CcmF and CcmH. The chain is Cytochrome c-type biogenesis protein CcmE from Rhizobium etli (strain CIAT 652).